The sequence spans 365 residues: Phospho-N-acetylmuramoyl-pentapeptide-transferase (365 aa).

Transmembrane regions (helical) follow at residues 2–22 (ISLIIGIMVSLVVTIVGTPLL), 51–71 (TLGGVVINLAVVLGWCSSALY), 80–100 (PSWSAVLVLFAMLSMGFLGFI), 118–138 (GKFIGQFILATIYAVLALILP), 167–187 (VAIVLFVIWVNFLMTAWTNAI), 196–216 (LAAGSSMIAFIGYAIIAFWEF), 234–254 (PLDLTIIAACAAVACFGFLWY), 256–276 (SNPASIFMGDTGSLALGGLFA), 277–297 (AMSIATHTEFLAIILGGLFVI), and 340–360 (FWMIEMLFVLIALVLFYGDWV).

The protein belongs to the glycosyltransferase 4 family. MraY subfamily. Mg(2+) is required as a cofactor.

Its subcellular location is the cell membrane. It carries out the reaction UDP-N-acetyl-alpha-D-muramoyl-L-alanyl-gamma-D-glutamyl-meso-2,6-diaminopimeloyl-D-alanyl-D-alanine + di-trans,octa-cis-undecaprenyl phosphate = di-trans,octa-cis-undecaprenyl diphospho-N-acetyl-alpha-D-muramoyl-L-alanyl-D-glutamyl-meso-2,6-diaminopimeloyl-D-alanyl-D-alanine + UMP. Its pathway is cell wall biogenesis; peptidoglycan biosynthesis. Its function is as follows. Catalyzes the initial step of the lipid cycle reactions in the biosynthesis of the cell wall peptidoglycan: transfers peptidoglycan precursor phospho-MurNAc-pentapeptide from UDP-MurNAc-pentapeptide onto the lipid carrier undecaprenyl phosphate, yielding undecaprenyl-pyrophosphoryl-MurNAc-pentapeptide, known as lipid I. The sequence is that of Phospho-N-acetylmuramoyl-pentapeptide-transferase from Bifidobacterium adolescentis (strain ATCC 15703 / DSM 20083 / NCTC 11814 / E194a).